Consider the following 311-residue polypeptide: Methionyl-tRNA formyltransferase (311 aa).

110–113 (SLLP) contributes to the (6S)-5,6,7,8-tetrahydrofolate binding site.

This sequence belongs to the Fmt family.

The catalysed reaction is L-methionyl-tRNA(fMet) + (6R)-10-formyltetrahydrofolate = N-formyl-L-methionyl-tRNA(fMet) + (6S)-5,6,7,8-tetrahydrofolate + H(+). Functionally, attaches a formyl group to the free amino group of methionyl-tRNA(fMet). The formyl group appears to play a dual role in the initiator identity of N-formylmethionyl-tRNA by promoting its recognition by IF2 and preventing the misappropriation of this tRNA by the elongation apparatus. The chain is Methionyl-tRNA formyltransferase from Streptococcus pyogenes serotype M18 (strain MGAS8232).